A 329-amino-acid chain; its full sequence is Probable CTD kinase subunit alpha homolog (329 aa).

Positions 22 to 297 (YEKIRIIGEG…VEQVVGSKYF (276 aa)) constitute a Protein kinase domain. ATP is bound by residues 28 to 36 (IGEGTFGQV) and lysine 49. Aspartate 139 (proton acceptor) is an active-site residue.

This sequence belongs to the protein kinase superfamily. CMGC Ser/Thr protein kinase family. CDC2/CDKX subfamily. In terms of assembly, component of the CTDK-I complex.

The protein localises to the nucleus. Its subcellular location is the nucleolus. It catalyses the reaction [DNA-directed RNA polymerase] + ATP = phospho-[DNA-directed RNA polymerase] + ADP + H(+). Catalytic subunit of the CTDK-I complex, which hyperphosphorylates the C-terminal heptapeptide repeat domain (CTD) of the largest RNA polymerase II subunit. Involved in RNA polymerase II transcriptional elongation and pre-mRNA 3'-end processing. The chain is Probable CTD kinase subunit alpha homolog (CTK1) from Encephalitozoon cuniculi (strain GB-M1) (Microsporidian parasite).